Here is a 96-residue protein sequence, read N- to C-terminus: Co-chaperonin GroES (96 aa).

Belongs to the GroES chaperonin family. Heptamer of 7 subunits arranged in a ring. Interacts with the chaperonin GroEL.

Its subcellular location is the cytoplasm. In terms of biological role, together with the chaperonin GroEL, plays an essential role in assisting protein folding. The GroEL-GroES system forms a nano-cage that allows encapsulation of the non-native substrate proteins and provides a physical environment optimized to promote and accelerate protein folding. GroES binds to the apical surface of the GroEL ring, thereby capping the opening of the GroEL channel. The chain is Co-chaperonin GroES from Hydrogenobaculum sp. (strain Y04AAS1).